The following is a 240-amino-acid chain: Purine nucleoside phosphorylase RP494 (240 aa).

The Zn(2+) site is built by histidine 60, cysteine 96, and histidine 113.

This sequence belongs to the purine nucleoside phosphorylase YfiH/LACC1 family. Homodimer. Requires Cu(2+) as cofactor. Zn(2+) is required as a cofactor.

It carries out the reaction adenosine + phosphate = alpha-D-ribose 1-phosphate + adenine. The catalysed reaction is S-methyl-5'-thioadenosine + phosphate = 5-(methylsulfanyl)-alpha-D-ribose 1-phosphate + adenine. It catalyses the reaction inosine + phosphate = alpha-D-ribose 1-phosphate + hypoxanthine. The enzyme catalyses adenosine + H2O + H(+) = inosine + NH4(+). Its function is as follows. Purine nucleoside enzyme that catalyzes the phosphorolysis of adenosine and inosine nucleosides, yielding D-ribose 1-phosphate and the respective free bases, adenine and hypoxanthine. Also catalyzes the phosphorolysis of S-methyl-5'-thioadenosine into adenine and S-methyl-5-thio-alpha-D-ribose 1-phosphate. Also has adenosine deaminase activity. The sequence is that of Purine nucleoside phosphorylase RP494 from Rickettsia prowazekii (strain Madrid E).